We begin with the raw amino-acid sequence, 417 residues long: Pelargonidin 3-O-(6-caffeoylglucoside) 5-O-(6-O-malonylglucoside) 4'''-malonyltransferase (417 aa).

Residues His147 and Asp360 each act as proton acceptor in the active site.

It belongs to the plant acyltransferase family. As to quaternary structure, monomer. As to expression, expressed at higher level in recently opened, fully pigmented flowers.

The catalysed reaction is 4'''-demalonylsalvianin + malonyl-CoA = salvianin + CoA. Its pathway is pigment biosynthesis; anthocyanin biosynthesis. With respect to regulation, inhibited by the following metal ions: Cd(2+), Cu(2+), Fe(2+), Hg(2+) and Zn(2+). Activity is strongly inhibited by CoA-SH and partially inhibited by acetyl-CoA, caffeic acid and bisdemalonylsalvianin. In terms of biological role, catalyzes the transfer of the malonyl group from malonyl-CoA to the 4'''-hydroxyl group of the 5-glucosyl moiety of anthocyanins. Anthocyanins are ubiquitous colored pigments that are responsible for petal color. In Salvia splendens (Scarlet sage), this protein is Pelargonidin 3-O-(6-caffeoylglucoside) 5-O-(6-O-malonylglucoside) 4'''-malonyltransferase.